The following is an 88-amino-acid chain: Small capsomere-interacting protein (88 aa).

Positions M1 to Q30 are disordered. Residues L9–S19 are compositionally biased toward polar residues.

This sequence belongs to the herpesviridae small capsomere-interacting protein family. In terms of assembly, interacts with the major capsid protein/MCP.

The protein resides in the virion. The protein localises to the host nucleus. Participates in the assembly of the infectious particles by decorating the outer surface of the capsid shell and thus forming a layer between the capsid and the tegument. Complexes composed of the major capsid protein and small capsomere-interacting protein/SCP assemble together in the host cytoplasm and are translocated to the nucleus, where they accumulate and participate in capsid assembly. The protein is Small capsomere-interacting protein of Human herpesvirus 6A (strain Uganda-1102) (HHV-6 variant A).